Consider the following 225-residue polypeptide: Endo-1,4-beta-xylanase (225 aa).

Residues 1–31 (MVGFTPVALAALAATGALAFPAGNATELEKR) form the signal peptide. Q32 carries the post-translational modification Pyrrolidone carboxylic acid. Positions 32–222 (QTTPNSEGWH…SSGYARITVA (191 aa)) constitute a GH11 domain. The active-site Nucleophile is E117. The cysteines at positions 141 and 185 are disulfide-linked. The active-site Proton donor is the E209.

It carries out the reaction Endohydrolysis of (1-&gt;4)-beta-D-xylosidic linkages in xylans.. The protein operates within glycan degradation; xylan degradation. This chain is Endo-1,4-beta-xylanase (XYNA), found in Thermomyces lanuginosus (Humicola lanuginosa).